The following is a 164-amino-acid chain: UPF0303 protein RHE_CH02903 (164 aa).

It belongs to the UPF0303 family.

The chain is UPF0303 protein RHE_CH02903 from Rhizobium etli (strain ATCC 51251 / DSM 11541 / JCM 21823 / NBRC 15573 / CFN 42).